The chain runs to 559 residues: Poly(3-hydroxyalkanoate) polymerase 1 (559 aa).

Cys-296 is an active-site residue.

The protein belongs to the PHA/PHB synthase family. Type II PhaC subfamily.

The protein operates within biopolymer metabolism; poly-(R)-3-hydroxybutanoate biosynthesis. Synthesizes poly(3-hydroxyalkanoates) (PHA), complements a mutant of P.putida that does not make PHA. In Ectopseudomonas oleovorans (Pseudomonas oleovorans), this protein is Poly(3-hydroxyalkanoate) polymerase 1.